Here is a 1342-residue protein sequence, read N- to C-terminus: Subtilisin-like protease 2 (1342 aa).

Residues 1–18 form the signal peptide; the sequence is MLNIIYVVSLILIKFIFY. A propeptide spans 19-687 (inhibition peptide); sequence KECNNNNNYY…KLYNNKYSFL (669 aa). Disordered regions lie at residues 85 to 111 and 143 to 171; these read EKKT…ENEI and ADVS…NYKN. 5 N-linked (GlcNAc...) asparagine glycosylation sites follow: asparagine 165, asparagine 343, asparagine 451, asparagine 455, and asparagine 493. The segment at 415 to 474 is disordered; the sequence is KKSKKEKENTQQKGGNNPNVDINILNNNNNNNNNNNNNSNNNSNSMNDEEINYNNNNNKE. Positions 430–474 are enriched in low complexity; sequence NNPNVDINILNNNNNNNNNNNNNSNNNSNSMNDEEINYNNNNNKE. Residues 500 to 531 are disordered; sequence IYHNKNDNSYKNKKEGTGKNNDNNDPNNNNNK. Basic and acidic residues predominate over residues 503 to 516; the sequence is NKNDNSYKNKKEGT. A compositionally biased stretch (low complexity) spans 518–531; the sequence is KNNDNNDPNNNNNK. N-linked (GlcNAc...) asparagine glycans are attached at residues asparagine 551, asparagine 642, and asparagine 729. At 688–1137 the chain is on the extracellular side; the sequence is NKFLNIEPLI…LYNLYEYDSH (450 aa). One can recognise a Peptidase S8 domain in the interval 727–1020; that stretch reads TWNLSIIRVF…DSLVNAEGAV (294 aa). Residues aspartate 755 and histidine 798 each act as charge relay system in the active site. N-linked (GlcNAc...) asparagine glycans are attached at residues asparagine 821, asparagine 857, asparagine 893, and asparagine 951. Serine 961 (charge relay system) is an active-site residue. N-linked (GlcNAc...) asparagine glycosylation is found at asparagine 1010 and asparagine 1106. A helical membrane pass occupies residues 1138–1158; it reads YLLASVILFFLALLSIFVGMI. At 1159 to 1342 the chain is on the cytoplasmic side; that stretch reads YMKSRKHSDK…MNQLDDMFMK (184 aa).

The protein belongs to the peptidase S8 family. Proteolytically cleaved at the N-terminus to generate a 74kDa intermediate which is further processed into a 72kDa form. The first maturation cleavage is autocatalytic, occurs in the ER and is necessary for the subsequent SUB2 trafficking to the microneme. The second cleavage may be mediated by PMX/plasmepsin X.

The protein resides in the cell membrane. The protein localises to the cytoplasmic vesicle. Its subcellular location is the secretory vesicle. It localises to the microneme membrane. It carries out the reaction Hydrolysis of proteins with broad specificity for peptide bonds, and a preference for a large uncharged residue in P1. Hydrolyzes peptide amides.. Its activity is regulated as follows. Activation may be calcium-dependent. Inhibited by the non-covalent interaction with the cleaved propeptide. Serine protease which plays an essential role in the shedding of AMA1, MSP1 and MSP7 from the surface of the invading merozoite; this step is essential for productive invasion and the release of the adhesion between the erythrocyte and the merozoite. May cleave TRAMP/PTTRAMP, thereby shedding TRAMP from the merozoite surface during erythrocyte invasion. The polypeptide is Subtilisin-like protease 2 (Plasmodium falciparum).